We begin with the raw amino-acid sequence, 735 residues long: Wall-associated receptor kinase 1 (735 aa).

The N-terminal stretch at 1–24 is a signal peptide; the sequence is MKVQEGLFLVAIFFSLACTQLVKG. Over 25 to 331 the chain is Extracellular; that stretch reads QHQPGENCQN…TTTMSCKRKE (307 aa). Asn-38, Asn-56, Asn-80, Asn-90, Asn-113, Asn-140, Asn-209, Asn-235, and Asn-250 each carry an N-linked (GlcNAc...) asparagine glycan. Residues 67–254 form a polygalacturonic acid-binding region; the sequence is RPHVLSDIEV…SICGGNSTCL (188 aa). Residues 234-281 form the EGF-like 1 domain; sequence GNQTCEQVGSTSICGGNSTCLDSTPRNGYICRCNEGFDGNPYLSAGCQ. Intrachain disulfides connect Cys-238/Cys-253, Cys-247/Cys-264, Cys-266/Cys-280, Cys-286/Cys-303, Cys-297/Cys-312, and Cys-314/Cys-327. One can recognise an EGF-like 2; calcium-binding domain in the interval 282–328; that stretch reads DVNECTTSSTIHRHNCSDPKTCRNKVGGFYCKCQSGYRLDTTTMSCK. N-linked (GlcNAc...) asparagine glycosylation is present at Asn-296. Residues 332 to 352 form a helical membrane-spanning segment; sequence FAWTTILLVTTIGFLVILLGV. Residues 353-735 are Cytoplasmic-facing; it reads ACIQQRMKHL…VAILDIETGR (383 aa). The residue at position 398 (Thr-398) is a Phosphothreonine. One can recognise a Protein kinase domain in the interval 409–692; it reads YAESRILGQG…RVEKTKHKWS (284 aa). ATP is bound by residues 415–423 and Lys-437; that span reads LGQGGQGTV. The residue at position 482 (Tyr-482) is a Phosphotyrosine. Asp-534 acts as the Proton acceptor in catalysis. Thr-568 and Thr-573 each carry phosphothreonine. Tyr-581 bears the Phosphotyrosine mark.

Belongs to the protein kinase superfamily. Ser/Thr protein kinase family. Interacts with the glycine-rich proteins GRP3 and GRP3S, and the type 2C protein phosphatase KAPP. Component of a 500 kDa complex, composed of WAK1, GRP3 and KAPP. Interacts with the oxygen-evolving enhancer protein 2 (OEE2). In terms of tissue distribution, predominantly expressed in green tissues such as stems and leaves. Detected at organ junctions.

The protein resides in the membrane. The catalysed reaction is L-seryl-[protein] + ATP = O-phospho-L-seryl-[protein] + ADP + H(+). It carries out the reaction L-threonyl-[protein] + ATP = O-phospho-L-threonyl-[protein] + ADP + H(+). In terms of biological role, serine/threonine-protein kinase that may function as a signaling receptor of extracellular matrix component. Binding to pectin may have significance in the control of cell expansion, morphogenesis and development. Required during plant's response to pathogen infection and in plant defense against heavy metal toxicity. Phosphorylates the oxygen-evolving enhancer protein 2 (OEE2) in an GRP-3-dependent manner. The chain is Wall-associated receptor kinase 1 (WAK1) from Arabidopsis thaliana (Mouse-ear cress).